Reading from the N-terminus, the 475-residue chain is tRNA-2-methylthio-N(6)-dimethylallyladenosine synthase (475 aa).

Positions 7-127 (RKLHIKSYGC…LPKLLAKARD (121 aa)) constitute an MTTase N-terminal domain. Cysteine 16, cysteine 52, cysteine 90, cysteine 168, cysteine 172, and cysteine 175 together coordinate [4Fe-4S] cluster. The region spanning 154–388 (RARGVSAFVT…AQLQALIDAQ (235 aa)) is the Radical SAM core domain. In terms of domain architecture, TRAM spans 394–456 (RAAIGRTVEV…RYSLKGRLAS (63 aa)).

It belongs to the methylthiotransferase family. MiaB subfamily. Monomer. The cofactor is [4Fe-4S] cluster.

It is found in the cytoplasm. It catalyses the reaction N(6)-dimethylallyladenosine(37) in tRNA + (sulfur carrier)-SH + AH2 + 2 S-adenosyl-L-methionine = 2-methylsulfanyl-N(6)-dimethylallyladenosine(37) in tRNA + (sulfur carrier)-H + 5'-deoxyadenosine + L-methionine + A + S-adenosyl-L-homocysteine + 2 H(+). Functionally, catalyzes the methylthiolation of N6-(dimethylallyl)adenosine (i(6)A), leading to the formation of 2-methylthio-N6-(dimethylallyl)adenosine (ms(2)i(6)A) at position 37 in tRNAs that read codons beginning with uridine. The sequence is that of tRNA-2-methylthio-N(6)-dimethylallyladenosine synthase from Afipia carboxidovorans (strain ATCC 49405 / DSM 1227 / KCTC 32145 / OM5) (Oligotropha carboxidovorans).